The sequence spans 96 residues: Co-chaperonin GroES (96 aa).

Belongs to the GroES chaperonin family. As to quaternary structure, heptamer of 7 subunits arranged in a ring. Interacts with the chaperonin GroEL.

Its subcellular location is the cytoplasm. Together with the chaperonin GroEL, plays an essential role in assisting protein folding. The GroEL-GroES system forms a nano-cage that allows encapsulation of the non-native substrate proteins and provides a physical environment optimized to promote and accelerate protein folding. GroES binds to the apical surface of the GroEL ring, thereby capping the opening of the GroEL channel. The protein is Co-chaperonin GroES of Thioalkalivibrio sulfidiphilus (strain HL-EbGR7).